Here is a 631-residue protein sequence, read N- to C-terminus: Mitochondrial Rho GTPase (631 aa).

At 1–605 (MRAGRVRPLR…TQADLKSSTF (605 aa)) the chain is on the cytoplasmic side. In terms of domain architecture, Miro 1 spans 15–181 (KKDVRILLVG…FYYAQKAVLH (167 aa)). Residues Arg-27, Gly-29, Lys-30, Thr-31, and Ser-32 each coordinate GTP. Thr-31 lines the Mg(2+) pocket. Mg(2+) is bound at residue Asp-70. Ser-72 is a binding site for GTP. Lys-105 bears the N6-acetyllysine mark. The GTP site is built by Asn-131, Lys-132, Asp-134, Ala-162, and Lys-163. Residue Lys-166 forms a Glycyl lysine isopeptide (Lys-Gly) (interchain with G-Cter in ubiquitin) linkage. Residues 197–232 (ACIKALTRIFKISDQDNDGTLNDAELNFFQRICFNT) form the EF-hand 1 domain. Positions 210, 212, 214, 216, and 221 each coordinate Ca(2+). Lys-248 is covalently cross-linked (Glycyl lysine isopeptide (Lys-Gly) (interchain with G-Cter in ubiquitin)). In terms of domain architecture, EF-hand 2 spans 317–352 (HAYLFLQSTFDKHDLDRDCALSPDELKDLFQVFPYI). Residues Asp-330, Asp-332, Asp-334, Ala-336, and Glu-341 each contribute to the Ca(2+) site. The Miro 2 domain occupies 429 to 592 (RNVFRCNVIG…FVKLTTMAMY (164 aa)). GTP is bound by residues Gly-441, Cys-442, Gly-443, Lys-444, Thr-445, Gly-446, Lys-460, Lys-541, Asp-543, Thr-571, and Cys-572. Residue Gly-441 participates in Mg(2+) binding. Residue Lys-585 forms a Glycyl lysine isopeptide (Lys-Gly) (interchain with G-Cter in ubiquitin) linkage. A helical; Anchor for type IV membrane protein transmembrane segment spans residues 606–628 (WLRASFGATVFAVVGFAMYRALL). Over 629-631 (KQR) the chain is Mitochondrial intermembrane.

This sequence belongs to the mitochondrial Rho GTPase family. Homodimer. Interacts with the kinesin-binding proteins TRAK1/OIP106 and TRAK2/GRIF1, forming a link between mitochondria and the trafficking apparatus of the microtubules. Interacts with RAP1GDS1. Interacts with ARMCX1. Found in a complex with KIF5B, OGT, RHOT2 and TRAK1. Ubiquitinated by PRKN during mitophagy, leading to its degradation and enhancement of mitophagy. Deubiquitinated by USP30. Post-translationally, acetylation on Lys-105 decreases sensitivity of mitochondrial transport to elevated Ca(2+) levels, increases mitochondrial transport and promotes axon growth. Deacetylated by HDAC6 which blocks mitochondrial transport and mediates axon growth inhibition.

The protein localises to the mitochondrion outer membrane. It catalyses the reaction GTP + H2O = GDP + phosphate + H(+). It carries out the reaction ATP + H2O = ADP + phosphate + H(+). The enzyme catalyses UTP + H2O = UDP + phosphate + H(+). Functionally, atypical mitochondrial nucleoside-triphosphatase (NTPase) involved in mitochondrial trafficking. Probably involved in control of anterograde transport of mitochondria and their subcellular distribution. Promotes mitochondrial fission during high calcium conditions. Can hydrolyze GTP, ATP and UTP. The sequence is that of Mitochondrial Rho GTPase from Rattus norvegicus (Rat).